Here is a 91-residue protein sequence, read N- to C-terminus: Small ribosomal subunit protein uS19 (91 aa).

Belongs to the universal ribosomal protein uS19 family.

Functionally, protein S19 forms a complex with S13 that binds strongly to the 16S ribosomal RNA. The sequence is that of Small ribosomal subunit protein uS19 from Marinobacter nauticus (strain ATCC 700491 / DSM 11845 / VT8) (Marinobacter aquaeolei).